A 1193-amino-acid polypeptide reads, in one-letter code: Nucleolar protein 6 (1193 aa).

Disordered regions lie at residues 1-69 (MRFV…TKNV) and 1137-1193 (KREQ…KVLK). Basic and acidic residues-rich tracts occupy residues 31–46 (AGDHSDLDEPKPKIAK) and 1151–1161 (DANKAEEESKP). The residue at position 35 (serine 35) is a Phosphoserine. Residues 1162 to 1184 (KPKKHRQRKGTGKKALPKRKRLI) are compositionally biased toward basic residues.

The protein belongs to the NRAP family. In terms of assembly, part of the small subunit (SSU) processome, composed of more than 70 proteins and the RNA chaperone small nucleolar RNA (snoRNA) U3. Expressed in nurse cells at stages 9-10 of oogenesis and exported to the oocyte.

The protein localises to the nucleus. The protein resides in the nucleolus. It localises to the chromosome. Functionally, part of the small subunit (SSU) processome, first precursor of the small eukaryotic ribosomal subunit. During the assembly of the SSU processome in the nucleolus, many ribosome biogenesis factors, an RNA chaperone and ribosomal proteins associate with the nascent pre-rRNA and work in concert to generate RNA folding, modifications, rearrangements and cleavage as well as targeted degradation of pre-ribosomal RNA by the RNA exosome. This chain is Nucleolar protein 6, found in Drosophila melanogaster (Fruit fly).